A 434-amino-acid chain; its full sequence is DNA primase DnaG (434 aa).

The Toprim domain occupies 171 to 250; that stretch reads DAIIIVEGRA…AFSPRRRSVE (80 aa). The Mg(2+) site is built by Glu177, Asp219, and Asp221. A disordered region spans residues 290–319; it reads GEEEHSSVSQKEEGNNTTPDVPADLPEEPP. The segment covering 292 to 303 has biased composition (basic and acidic residues); that stretch reads EEHSSVSQKEEG.

Belongs to the archaeal DnaG primase family. Forms a ternary complex with MCM helicase and DNA. The cofactor is Mg(2+).

It catalyses the reaction ssDNA + n NTP = ssDNA/pppN(pN)n-1 hybrid + (n-1) diphosphate.. Its function is as follows. RNA polymerase that catalyzes the synthesis of short RNA molecules used as primers for DNA polymerase during DNA replication. The chain is DNA primase DnaG from Methanocorpusculum labreanum (strain ATCC 43576 / DSM 4855 / Z).